Consider the following 359-residue polypeptide: UDP-3-O-acylglucosamine N-acyltransferase (359 aa).

H256 functions as the Proton acceptor in the catalytic mechanism.

It belongs to the transferase hexapeptide repeat family. LpxD subfamily. As to quaternary structure, homotrimer.

It catalyses the reaction a UDP-3-O-[(3R)-3-hydroxyacyl]-alpha-D-glucosamine + a (3R)-hydroxyacyl-[ACP] = a UDP-2-N,3-O-bis[(3R)-3-hydroxyacyl]-alpha-D-glucosamine + holo-[ACP] + H(+). It functions in the pathway bacterial outer membrane biogenesis; LPS lipid A biosynthesis. Its function is as follows. Catalyzes the N-acylation of UDP-3-O-acylglucosamine using 3-hydroxyacyl-ACP as the acyl donor. Is involved in the biosynthesis of lipid A, a phosphorylated glycolipid that anchors the lipopolysaccharide to the outer membrane of the cell. This chain is UDP-3-O-acylglucosamine N-acyltransferase, found in Rhodopseudomonas palustris (strain BisB5).